The following is a 380-amino-acid chain: MKEKEKIIVAMSGGVDSAVAAGLLMEAGYDVIGVNLRTWEYEAPACDTTKKSCCSPEDIRDARDVGLSLNIPFYVIKMEKVFGERVIDRFISDYKDGRTPNPCVECNTFVKFGALFEQAKKLGIDKIATGHYARVIEVDGRYAIRNAVDMKKNQTYYLYGLSQDNIKNTVFPLGEMDKSEVREIAKRMGLPVAEKPESQEICFIPENDYRSFLKKKGMEFTPGFFKLASGQIIGKHQGKEGFTIGQRKGLGIAWKNPLYVLSIEDDGTVVLGEEEETVSESFVLEEITYQALAPLALGQSMEMKVQIRYRSAPVHCKVTSLGETWKVNFLEDVKSVTPGQSATFYPTNGDYLFAGGIIQKGSITRKIKSNVEVQRESVPI.

ATP-binding positions include 10–17 (AMSGGVDS) and Leu36. Cys106 (nucleophile) is an active-site residue. A disulfide bridge links Cys106 with Cys202. Gly130 contacts ATP. The interval 152-154 (KNQ) is interaction with tRNA. Cys202 (cysteine persulfide intermediate) is an active-site residue. An interaction with tRNA region spans residues 308–309 (RY).

This sequence belongs to the MnmA/TRMU family.

Its subcellular location is the cytoplasm. It catalyses the reaction S-sulfanyl-L-cysteinyl-[protein] + uridine(34) in tRNA + AH2 + ATP = 2-thiouridine(34) in tRNA + L-cysteinyl-[protein] + A + AMP + diphosphate + H(+). Its function is as follows. Catalyzes the 2-thiolation of uridine at the wobble position (U34) of tRNA, leading to the formation of s(2)U34. The chain is tRNA-specific 2-thiouridylase MnmA from Leptospira biflexa serovar Patoc (strain Patoc 1 / Ames).